Reading from the N-terminus, the 60-residue chain is Large ribosomal subunit protein bL32 (60 aa).

Residues 1–20 (MAVPKRKTSPSRRNMRRSHH) show a composition bias toward basic residues. Positions 1–60 (MAVPKRKTSPSRRNMRRSHHALGANSFIEDKDTGELRRPHHVDLKTGMYNGKQILTPKED) are disordered. Residues 28 to 44 (IEDKDTGELRRPHHVDL) are compositionally biased toward basic and acidic residues.

Belongs to the bacterial ribosomal protein bL32 family.

This Caulobacter vibrioides (strain ATCC 19089 / CIP 103742 / CB 15) (Caulobacter crescentus) protein is Large ribosomal subunit protein bL32.